Reading from the N-terminus, the 245-residue chain is Purine nucleoside phosphorylase (245 aa).

His7 is an a purine D-ribonucleoside binding site. Phosphate-binding positions include 23 to 27 (GDPGR), Arg45, and 88 to 91 (RAGS). Residue 183-184 (ME) coordinates a purine D-ribonucleoside. Asp206 serves as the catalytic Proton donor.

It belongs to the PNP/MTAP phosphorylase family. In terms of assembly, homohexamer; trimer of homodimers.

The catalysed reaction is inosine + phosphate = alpha-D-ribose 1-phosphate + hypoxanthine. It carries out the reaction guanosine + phosphate = alpha-D-ribose 1-phosphate + guanine. It catalyses the reaction 2'-deoxyguanosine + phosphate = 2-deoxy-alpha-D-ribose 1-phosphate + guanine. The enzyme catalyses 2'-deoxyinosine + phosphate = 2-deoxy-alpha-D-ribose 1-phosphate + hypoxanthine. The catalysed reaction is S-methyl-5'-thioinosine + phosphate = 5-(methylsulfanyl)-alpha-D-ribose 1-phosphate + hypoxanthine. It participates in purine metabolism; purine nucleoside salvage. Its activity is regulated as follows. Inhibited by Immucillin-H and 5'-methylthio-Immucillin-H. Inhibited by 5'-deaza-1'-aza-2c-deoxy-1'-(9-methylene)-Immucilin-G (DADMe-ImmG). Its function is as follows. As part of the purine salvage pathway, catalyzes the phosphorolytic breakdown of the N-glycosidic bond in the beta-(deoxy)ribonucleoside molecules, with the formation of the corresponding free purine bases and pentose-1-phosphate. Preferentially acts on inosine and guanosine, and to a lesser extent on 2'-deoxyguanosine and guanosine. Also catalyzes the phosphorylation of S-methyl-5'-thioinosine (MTI) to hypoxanthine; MTI is produced by adenosine deaminase (ADA)-mediated breakdown of S-methyl-5'-thioadenosine (MTA), a major by-product of polyamine biosynthesis. Generates hypoxanthine from both the purine salvage pathway and from polyamine metabolism which is required for nucleic acids synthesis. Has no activity towards adenosine. The sequence is that of Purine nucleoside phosphorylase from Plasmodium falciparum (isolate 3D7).